A 156-amino-acid chain; its full sequence is UPF0523 protein C (156 aa).

This sequence belongs to the UPF0523 family.

This is UPF0523 protein C from Dictyostelium discoideum (Social amoeba).